We begin with the raw amino-acid sequence, 540 residues long: MTQNSLPSWSSLQTHYEKIRDAHMRDWFAPENDPAPTRAERFAFAGGGLAADFSKNRITDETLKLLVQLAREAGVEKRRDAMFAGAVVNPTEGRAALHTALRATDPKAPFYDQVQAERARMAAFADQVRSGEWKGYTGKRIRYVVNIGIGGSDLGPKMVVHALHHLATPEITTHFVSNVDGADLYNVMQQIDPEETLAIIVSKTFTTLETMTNARSLRDWFVEKGCPESALAKHFVGVSANPAEVVKFGIAKENVFEMWDWVGGRYSLWSAVGLSIMIAVGPQQFGELLAGANEMDQHFRDAPLEKNLPVLLGMIGIWYRNFFGSQSYLVAPYSEALHFLPSYLQQLEMESNGKSARLDGVMVDYPTAAVTWGEPGTNGQHAFFQMLHQGPTIVPIDFIAVLTPEHPLVSHHPKLLANCFAQSEALMLGRTLEEAKKVAGADKPELAPHLVFPGNRPTSTLLVDALTARSLGALIALYEHKVLVQASVWDINPFDQWGVELGKILGKVVEADLTAPSVDEKKHDSSTSALIARARAALKK.

E350 functions as the Proton donor in the catalytic mechanism. Active-site residues include H381 and K503.

It belongs to the GPI family.

It localises to the cytoplasm. It carries out the reaction alpha-D-glucose 6-phosphate = beta-D-fructose 6-phosphate. It functions in the pathway carbohydrate biosynthesis; gluconeogenesis. It participates in carbohydrate degradation; glycolysis; D-glyceraldehyde 3-phosphate and glycerone phosphate from D-glucose: step 2/4. Its function is as follows. Catalyzes the reversible isomerization of glucose-6-phosphate to fructose-6-phosphate. The chain is Glucose-6-phosphate isomerase from Paraburkholderia xenovorans (strain LB400).